The chain runs to 351 residues: Type II methyltransferase M.DsaV (351 aa).

Positions 6-312 (LKFIDLFAGI…QKMLSYIDLT (307 aa)) constitute an SAM-dependent MTase C5-type domain. Cys-75 is a catalytic residue.

This sequence belongs to the class I-like SAM-binding methyltransferase superfamily. C5-methyltransferase family.

The enzyme catalyses a 2'-deoxycytidine in DNA + S-adenosyl-L-methionine = a 5-methyl-2'-deoxycytidine in DNA + S-adenosyl-L-homocysteine + H(+). Its function is as follows. A methylase, recognizes the double-stranded sequence 5'-CCNGG-3', methylates C-2 on both strands, and protects the DNA from cleavage by the DsaV endonuclease. In Dactylococcopsis salina (Myxobaktron salinum), this protein is Type II methyltransferase M.DsaV.